Reading from the N-terminus, the 26-residue chain is uncharacterized protein (26 aa).

The chain crosses the membrane as a helical span at residues 3–23 (IIYLILFLIVIYLLYRILDVL).

It is found in the membrane. This is an uncharacterized protein from Helicobacter pylori (strain J99 / ATCC 700824) (Campylobacter pylori J99).